We begin with the raw amino-acid sequence, 985 residues long: Regulator of telomere elongation helicase 1 homolog (985 aa).

In terms of domain architecture, Helicase ATP-binding spans 7–303 (AGIPVHFPFE…QDMAGDEPKD (297 aa)). Residue 42 to 49 (SPTGTGKT) participates in ATP binding. Residues C146, C164, C173, and C209 each coordinate [4Fe-4S] cluster. The DEAH box signature appears at 252–255 (DEAH). The disordered stretch occupies residues 863 to 883 (VKIHKRERSSPTAPESSSQVT). A compositionally biased stretch (polar residues) spans 872–882 (SPTAPESSSQV). T874 carries the phosphothreonine modification.

Belongs to the helicase family. RAD3/XPD subfamily. Expressed in both male germline and somatic cells (at protein level). Expressed in ovarian germline stem cells (at protein level). Expressed in adult testes (at protein level). Expressed in the germarium including germline stem cells.

It is found in the nucleus. The protein localises to the chromosome. It catalyses the reaction ATP + H2O = ADP + phosphate + H(+). A probable ATP-dependent DNA helicase implicated in DNA repair and the maintenance of genomic stability. Acts as an anti-recombinase to counteract toxic recombination and limit crossover during meiosis. Regulates meiotic recombination and crossover homeostasis by physically dissociating strand invasion events and thereby promotes noncrossover repair by meiotic synthesis dependent strand annealing (SDSA) as well as disassembly of D loop recombination intermediates. In male germline stem cells (GSCs), plays a role in GSCs maintenance during larval germline development by modulating the expression of genes such as Stat92E and preventing DNA damage-induced checkpoint activation. May play a role in female germline stem cell maintenance. The protein is Regulator of telomere elongation helicase 1 homolog of Drosophila melanogaster (Fruit fly).